The sequence spans 141 residues: MAARLCCQLDPARDVLLLRPFGSQSSGPPFPRPSAGSAASPASSLSASDESDLPLGRLPACFASASGPCCLVVTCAELRTMDSTVNFVSWHANRQLGMPSKDLWTPYIRDQLLTKWEEGSIDPRLSIFVLGGCRHKCMRLP.

Low complexity predominate over residues 24-48; sequence QSSGPPFPRPSAGSAASPASSLSAS. The segment at 24 to 51 is disordered; it reads QSSGPPFPRPSAGSAASPASSLSASDES. The tract at residues 68-113 is mitochondrial targeting sequence; the sequence is PCCLVVTCAELRTMDSTVNFVSWHANRQLGMPSKDLWTPYIRDQLL.

It belongs to the orthohepadnavirus protein X family. May form homodimer. May interact with host CEBPA, CFLAR, CREB1, DDB1, E4F1, HBXIP, HSPD1/HSP60, NFKBIA, POLR2E and SMAD4. Interacts with host SMC5-SMC6 complex and induces its degradation. Interacts with host TRPC4AP; leading to prevent ubiquitination of TRPC4AP. Interacts with host PLSCR1; this interaction promotes ubiquitination and degradation of HBx and impairs HBx-mediated cell proliferation. Post-translationally, a fraction may be phosphorylated in insect cells and HepG2 cells, a human hepatoblastoma cell line. Phosphorylated in vitro by host protein kinase C or mitogen-activated protein kinase. N-acetylated in insect cells.

The protein localises to the host cytoplasm. It localises to the host nucleus. Its subcellular location is the host mitochondrion. Its function is as follows. Multifunctional protein that plays a role in silencing host antiviral defenses and promoting viral transcription. Does not seem to be essential for HBV infection. May be directly involved in development of cirrhosis and liver cancer (hepatocellular carcinoma). Most of cytosolic activities involve modulation of cytosolic calcium. The effect on apoptosis is controversial depending on the cell types in which the studies have been conducted. May induce apoptosis by localizing in mitochondria and causing loss of mitochondrial membrane potential. May also modulate apoptosis by binding host CFLAR, a key regulator of the death-inducing signaling complex (DISC). Promotes viral transcription by using the host E3 ubiquitin ligase DDB1 to target the SMC5-SMC6 complex to proteasomal degradation. This host complex would otherwise bind to viral episomal DNA, and prevents its transcription. Moderately stimulates transcription of many different viral and cellular transcription elements. Promoters and enhancers stimulated by HBx contain DNA binding sites for NF-kappa-B, AP-1, AP-2, c-EBP, ATF/CREB, or the calcium-activated factor NF-AT. The protein is Protein X of Woodchuck hepatitis B virus (isolate 1) (WHV).